The sequence spans 202 residues: Glycerol-3-phosphate acyltransferase (202 aa).

Helical transmembrane passes span A2–V22, L80–V100, A119–F139, and V158–I178.

Belongs to the PlsY family. As to quaternary structure, probably interacts with PlsX.

It is found in the cell inner membrane. It catalyses the reaction an acyl phosphate + sn-glycerol 3-phosphate = a 1-acyl-sn-glycero-3-phosphate + phosphate. It functions in the pathway lipid metabolism; phospholipid metabolism. Functionally, catalyzes the transfer of an acyl group from acyl-phosphate (acyl-PO(4)) to glycerol-3-phosphate (G3P) to form lysophosphatidic acid (LPA). This enzyme utilizes acyl-phosphate as fatty acyl donor, but not acyl-CoA or acyl-ACP. In Cupriavidus necator (strain ATCC 17699 / DSM 428 / KCTC 22496 / NCIMB 10442 / H16 / Stanier 337) (Ralstonia eutropha), this protein is Glycerol-3-phosphate acyltransferase.